The following is a 242-amino-acid chain: Pyridoxine 5'-phosphate synthase (242 aa).

N6 provides a ligand contact to 3-amino-2-oxopropyl phosphate. 8 to 9 provides a ligand contact to 1-deoxy-D-xylulose 5-phosphate; that stretch reads DH. Residue R17 coordinates 3-amino-2-oxopropyl phosphate. The active-site Proton acceptor is the H42. Positions 44 and 49 each coordinate 1-deoxy-D-xylulose 5-phosphate. E69 acts as the Proton acceptor in catalysis. Residue T99 coordinates 1-deoxy-D-xylulose 5-phosphate. Catalysis depends on H193, which acts as the Proton donor. 3-amino-2-oxopropyl phosphate is bound by residues G194 and 217–218; that span reads GH.

Belongs to the PNP synthase family. Homooctamer; tetramer of dimers.

It is found in the cytoplasm. The enzyme catalyses 3-amino-2-oxopropyl phosphate + 1-deoxy-D-xylulose 5-phosphate = pyridoxine 5'-phosphate + phosphate + 2 H2O + H(+). It functions in the pathway cofactor biosynthesis; pyridoxine 5'-phosphate biosynthesis; pyridoxine 5'-phosphate from D-erythrose 4-phosphate: step 5/5. Catalyzes the complicated ring closure reaction between the two acyclic compounds 1-deoxy-D-xylulose-5-phosphate (DXP) and 3-amino-2-oxopropyl phosphate (1-amino-acetone-3-phosphate or AAP) to form pyridoxine 5'-phosphate (PNP) and inorganic phosphate. In Aquifex aeolicus (strain VF5), this protein is Pyridoxine 5'-phosphate synthase.